The primary structure comprises 392 residues: CD2 homolog (392 aa).

Residues 1–16 (MIIKLIFLICFKIVLS) form the signal peptide. Residues 17–222 (IDNKTKFNET…YLDFFQVTSY (206 aa)) lie on the Extracellular side of the membrane. N-linked (GlcNAc...) asparagine; by host glycans are attached at residues N39, N88, N92, N106, N148, N159, N183, N191, N198, and N204. 2 disulfides stabilise this stretch: C137/C205 and C144/C188. The helical transmembrane segment at 223–243 (IFYMIIFIVTGITVSILISII) threads the bilayer. The Cytoplasmic portion of the chain corresponds to 244–392 (TFLFIRKRKH…ISLIHVDRII (149 aa)). Positions 258 to 290 (ESPPPESNEEEQQCHHDTTSIHEPSPREPLLPK) are disordered. Basic and acidic residues predominate over residues 269–283 (QQCHHDTTSIHEPSP). 5 consecutive repeat copies span residues 319–324 (KPCPPP), 325–330 (KPCPPP), 331–336 (KPCPPP), 337–342 (KPCPPS), and 343–348 (KPCPPP). The tract at residues 319–348 (KPCPPPKPCPPPKPCPPPKPCPPSKPCPPP) is 5 X 6 AA tandem repeats of K-P-C-[PRS]-[P]-[PS]. Positions 328-357 (PPPKPCPPPKPCPPSKPCPPPEPYSPPKPC) are disordered.

The protein belongs to the asfivirus CD2 homolog protein family. Both glycosylated and nonglycosylated forms interact (via C-terminus) with the host AP-1 complex. In terms of processing, cleaved into two fragments of 63 kDa and 26 kDa containing respectively the glycosylated N-terminus and the nonglycosylated C-terminus. A full-length 89-kDa glycosylated form also exists.

The protein localises to the host cell membrane. The protein resides in the virion membrane. It localises to the host Golgi apparatus. May play an immunosuppressive role by inhibiting lymphocyte proliferation and subsequently facilitating viral replication and generalization of infection. Responsible for viral hemadsorption, which may help viral spread. Increases virus replication in the tick vector at the step of virus uptake or replication in the tick gut. May play a role in the host Golgi reorganization to yield viral factories. May play a role in host cell penetration. The chain is CD2 homolog from Ornithodoros (relapsing fever ticks).